The primary structure comprises 156 residues: Large ribosomal subunit protein uL15 (156 aa).

Over residues 1–11 the composition is skewed to basic and acidic residues; the sequence is MKLNDLRDKPG. The tract at residues 1–44 is disordered; the sequence is MKLNDLRDKPGSVKARKRVGRGIGSGTGKTGGRGVKGQKSRSGV. The segment covering 21-35 has biased composition (gly residues); that stretch reads RGIGSGTGKTGGRGV.

Belongs to the universal ribosomal protein uL15 family. As to quaternary structure, part of the 50S ribosomal subunit.

In terms of biological role, binds to the 23S rRNA. This Brucella abortus (strain S19) protein is Large ribosomal subunit protein uL15.